We begin with the raw amino-acid sequence, 241 residues long: 1-(5-phosphoribosyl)-5-[(5-phosphoribosylamino)methylideneamino] imidazole-4-carboxamide isomerase (241 aa).

D8 serves as the catalytic Proton acceptor. Residue D129 is the Proton donor of the active site.

Belongs to the HisA/HisF family.

The protein resides in the cytoplasm. It catalyses the reaction 1-(5-phospho-beta-D-ribosyl)-5-[(5-phospho-beta-D-ribosylamino)methylideneamino]imidazole-4-carboxamide = 5-[(5-phospho-1-deoxy-D-ribulos-1-ylimino)methylamino]-1-(5-phospho-beta-D-ribosyl)imidazole-4-carboxamide. The protein operates within amino-acid biosynthesis; L-histidine biosynthesis; L-histidine from 5-phospho-alpha-D-ribose 1-diphosphate: step 4/9. The chain is 1-(5-phosphoribosyl)-5-[(5-phosphoribosylamino)methylideneamino] imidazole-4-carboxamide isomerase from Caulobacter sp. (strain K31).